The primary structure comprises 139 residues: MGQNWKRQQKLWNVPQLPFIRVPPSIYDTSLLKALNQGQQRYFYSIMRIYNSRPQWEALQTRYIHSLQHQQLLGYITQREALSYALVLRDSTKRASAKVAPQRTIPRKTSAMTRRCPSVLPVSVVLPRAQSKRRQVLRN.

It belongs to the FAM216 family.

This chain is Protein FAM216B (FAM216B), found in Homo sapiens (Human).